Consider the following 565-residue polypeptide: MPQASEHRLGRTREPPVNVQPRVGAKIPFPPRARSKERRNPVPGPNSMLRPLPPRPGPPDERLKKLDLGRGRTSGSRPRGPLRADHGVPLPGSPPPTVALPLPSRTNLTRSKSVSSGDLRPMGIALGGHRGTGELGAALSRLALRPEPPTLRRSTSLRRLGGFPGPPTLLSIRTEPPPSHGSFHMISARPSEPFYSDDKMAHHTLLLGSGHVGLRNLGNTCFLNAVLQCLSSTRPLRDFCLRRDFRQEVPGGGRAQELTEAFADVIGALWHPDSCEAVNPTRFRAVFQKYVPSFSGYSQQDAQEFLKLLMERLHLEINRRGRRAPPILASGPVPSPPRRGGALHEEPELSDDDRANLMWKRYLEREDSKIVDLFVGQLKSCLKCQACGYRSTTFEVFCDLSLPIPKKGFAGGKVSLRDCFSLFTKEEELESENAPVCDRCRQKTRSTKKLTVQRFPRILVLHLNRFSTSRGSIKKSSVGVDFPLQRLSLGDFASDKVGSPVYQLYALCNHSGSVHYGHYTALCRCQTGWHVYNDSRVSPVSENQVASSEGYVLFYQLMQEPPRCL.

Basic and acidic residues-rich tracts occupy residues 1-14 (MPQA…RTRE) and 58-70 (PPDE…DLGR). The segment at 1-128 (MPQASEHRLG…LRPMGIALGG (128 aa)) is disordered. Residues 71 to 81 (GRTSGSRPRGP) show a composition bias toward low complexity. The span at 104 to 116 (SRTNLTRSKSVSS) shows a compositional bias: polar residues. Positions 134–152 (ELGAALSRLALRPEPPTLR) match the Nuclear export signal motif. The region spanning 212-558 (VGLRNLGNTC…EGYVLFYQLM (347 aa)) is the USP domain. C221 functions as the Nucleophile in the catalytic mechanism. The disordered stretch occupies residues 324-347 (APPILASGPVPSPPRRGGALHEEP). Positions 384, 387, 437, and 440 each coordinate Zn(2+). Residue H518 is the Proton acceptor of the active site.

This sequence belongs to the peptidase C19 family. USP21 subfamily. Interacts with BEND3.

It is found in the cytoplasm. The protein resides in the nucleus. It catalyses the reaction Thiol-dependent hydrolysis of ester, thioester, amide, peptide and isopeptide bonds formed by the C-terminal Gly of ubiquitin (a 76-residue protein attached to proteins as an intracellular targeting signal).. Its function is as follows. Deubiquitinates histone H2A, a specific tag for epigenetic transcriptional repression, thereby acting as a coactivator. Deubiquitination of histone H2A releaves the repression of di- and trimethylation of histone H3 at 'Lys-4', resulting in regulation of transcriptional initiation. Regulates gene expression via histone H2A deubiquitination. Deubiquitinates BAZ2A/TIP5 leading to its stabilization. Also capable of removing NEDD8 from NEDD8 conjugates but has no effect on Sentrin-1 conjugates. Also acts as a negative regulator of the ribosome quality control (RQC) by mediating deubiquitination of 40S ribosomal proteins RPS10/eS10 and RPS20/uS10, thereby antagonizing ZNF598-mediated 40S ubiquitination. This is Ubiquitin carboxyl-terminal hydrolase 21 (Usp21) from Rattus norvegicus (Rat).